A 1575-amino-acid polypeptide reads, in one-letter code: Laminin subunit gamma-3 (1575 aa).

The signal sequence occupies residues 1–19 (MAAAALLLGLALLAPRAAG). The Laminin N-terminal domain occupies 31–270 (RPQRCLPVFE…AVSDFSVGGR (240 aa)). Residues asparagine 87 and asparagine 119 are each glycosylated (N-linked (GlcNAc...) asparagine). 16 disulfide bridges follow: cysteine 271/cysteine 280, cysteine 273/cysteine 290, cysteine 292/cysteine 301, cysteine 304/cysteine 324, cysteine 327/cysteine 336, cysteine 329/cysteine 352, cysteine 355/cysteine 364, cysteine 367/cysteine 380, cysteine 383/cysteine 395, cysteine 385/cysteine 401, cysteine 403/cysteine 412, cysteine 415/cysteine 427, cysteine 430/cysteine 441, cysteine 432/cysteine 448, cysteine 450/cysteine 459, and cysteine 462/cysteine 477. Laminin EGF-like domains follow at residues 271–326 (CKCN…ECLP), 327–382 (CNCS…PCQP), 383–429 (CDCQ…GCRP), and 430–479 (CTCN…GCSS). N-linked (GlcNAc...) asparagine glycosylation is present at asparagine 295. Asparagine 328 is a glycosylation site (N-linked (GlcNAc...) asparagine). Residues 480–489 (CFCYGHSKVC) form the Laminin EGF-like 5; first part domain. The Laminin IV type A domain maps to 499-672 (HILSDFHQGA…LSPPASWVEI (174 aa)). N-linked (GlcNAc...) asparagine glycosylation is present at asparagine 631. One can recognise a Laminin EGF-like 5; second part domain in the interval 673-706 (CSCPTGYTGQFCESCAPGYKREMPQGGPYASCVP). 24 cysteine pairs are disulfide-bonded: cysteine 707-cysteine 715, cysteine 709-cysteine 722, cysteine 724-cysteine 733, cysteine 736-cysteine 752, cysteine 755-cysteine 763, cysteine 757-cysteine 774, cysteine 777-cysteine 786, cysteine 789-cysteine 807, cysteine 810-cysteine 824, cysteine 812-cysteine 831, cysteine 834-cysteine 843, cysteine 846-cysteine 863, cysteine 866-cysteine 880, cysteine 868-cysteine 887, cysteine 889-cysteine 898, cysteine 901-cysteine 914, cysteine 917-cysteine 929, cysteine 919-cysteine 936, cysteine 938-cysteine 947, cysteine 950-cysteine 962, cysteine 965-cysteine 977, cysteine 967-cysteine 983, cysteine 985-cysteine 994, and cysteine 997-cysteine 1010. Laminin EGF-like domains follow at residues 707–754 (CTCN…DCQP), 755–809 (CPCP…PCHQ), 810–865 (CQCS…KCMP), 866–916 (CSCH…GCRS), 917–964 (CKCH…GCRA), and 965–1013 (CRCS…CQQC). A glycan (N-linked (GlcNAc...) asparagine) is linked at asparagine 837. Asparagine 980 is a glycosylation site (N-linked (GlcNAc...) asparagine). Residues 1014–1575 (PSCYALVKEE…SLPENCASWQ (562 aa)) form a domain II and I region. Residues 1059–1061 (RGD) carry the Cell attachment site motif. Positions 1073-1134 (REAFLEQMMS…SEEEILHAAA (62 aa)) form a coiled coil. N-linked (GlcNAc...) asparagine glycosylation is present at asparagine 1185. Residues 1201–1228 (LETQRDLEDRYQEVQAAQKALRTAVAEV) are a coiled coil. The tract at residues 1378 to 1399 (KQAERMLGNAAPLSSSAKKKGR) is disordered. Coiled-coil stretches lie at residues 1410 to 1492 (KLAK…LARL) and 1523 to 1567 (GSLQ…LHSL).

As to quaternary structure, laminin is a complex glycoprotein, consisting of three different polypeptide chains (alpha, beta, gamma), which are bound to each other by disulfide bonds into a cross-shaped molecule comprising one long and three short arms with globules at each end. Gamma-3 is a subunit of laminin-12 (laminin-213), laminin-14 (laminin-423) and laminin-15 (laminin-523). In terms of tissue distribution, broadly expressed in: skin, heart, lung, and the reproductive tracts.

It localises to the secreted. It is found in the extracellular space. The protein resides in the extracellular matrix. Its subcellular location is the basement membrane. Binding to cells via a high affinity receptor, laminin is thought to mediate the attachment, migration and organization of cells into tissues during embryonic development by interacting with other extracellular matrix components. In Homo sapiens (Human), this protein is Laminin subunit gamma-3 (LAMC3).